A 144-amino-acid chain; its full sequence is Putative pre-16S rRNA nuclease (144 aa).

This sequence belongs to the YqgF nuclease family.

It localises to the cytoplasm. In terms of biological role, could be a nuclease involved in processing of the 5'-end of pre-16S rRNA. The protein is Putative pre-16S rRNA nuclease of Prochlorococcus marinus (strain NATL1A).